The chain runs to 119 residues: Amicyanin-alpha (119 aa).

Positions 1 to 20 are cleaved as a signal peptide; that stretch reads MRALAFAAALAAFSATAALA. The region spanning 21 to 119 is the Plastocyanin-like domain; sequence AGALEAVQEA…PFMKGKVVVE (99 aa). Cu cation contacts are provided by His67, Cys106, His109, and Met112.

The cofactor is Cu cation.

It localises to the periplasm. Its pathway is one-carbon metabolism; methylamine degradation. Its function is as follows. Primary acceptor of electrons from methylamine dehydrogenase. Passes those electrons on either a soluble cytochrome c or to pseudoazurin. The polypeptide is Amicyanin-alpha (mauC) (Methylorubrum extorquens (strain ATCC 14718 / DSM 1338 / JCM 2805 / NCIMB 9133 / AM1) (Methylobacterium extorquens)).